The primary structure comprises 279 residues: Phosphate import ATP-binding protein PstB 1 (279 aa).

An ABC transporter domain is found at 26-274 (VMDCKLDKIF…PREQLTSDYI (249 aa)). An ATP-binding site is contributed by 59 to 66 (GPSGCGKS).

The protein belongs to the ABC transporter superfamily. Phosphate importer (TC 3.A.1.7) family. As to quaternary structure, the complex is composed of two ATP-binding proteins (PstB), two transmembrane proteins (PstC and PstA) and a solute-binding protein (PstS).

Its subcellular location is the cell inner membrane. The catalysed reaction is phosphate(out) + ATP + H2O = ADP + 2 phosphate(in) + H(+). Part of the ABC transporter complex PstSACB involved in phosphate import. Responsible for energy coupling to the transport system. This chain is Phosphate import ATP-binding protein PstB 1, found in Pseudomonas putida (strain ATCC 47054 / DSM 6125 / CFBP 8728 / NCIMB 11950 / KT2440).